The primary structure comprises 52 residues: Defensin D2 (52 aa).

Intrachain disulfides connect C8-C52, C19-C39, C25-C46, and C29-C48.

In terms of tissue distribution, distributed in the epidermal cell layer of leaves and in the subepidermal layer region of stems. Not in roots.

Its subcellular location is the secreted. The protein resides in the cell wall. In terms of biological role, antimicrobial peptide. Active against Fusarium spp., Gram-positive and Gram-negative bacterial pathogens. The chain is Defensin D2 from Spinacia oleracea (Spinach).